We begin with the raw amino-acid sequence, 1580 residues long: Pentafunctional AROM polypeptide (1580 aa).

Positions Met-1–Asn-381 are 3-dehydroquinate synthase. NAD(+)-binding positions include Asp-44–Thr-46, Glu-81–Lys-84, Gly-114–Val-116, and Asp-119. Position 130 (Arg-130) interacts with 7-phospho-2-dehydro-3-deoxy-D-arabino-heptonate. Thr-139–Thr-140 contacts NAD(+). 7-phospho-2-dehydro-3-deoxy-D-arabino-heptonate contacts are provided by Asp-146 and Lys-152. Residue Lys-161 participates in NAD(+) binding. Asn-162 serves as a coordination point for 7-phospho-2-dehydro-3-deoxy-D-arabino-heptonate. NAD(+) is bound by residues Phe-179–Thr-182 and Asn-190. Position 194 (Glu-194) interacts with Zn(2+). Lys-247 is a 7-phospho-2-dehydro-3-deoxy-D-arabino-heptonate binding site. Glu-257 (proton acceptor; for 3-dehydroquinate synthase activity) is an active-site residue. 7-phospho-2-dehydro-3-deoxy-D-arabino-heptonate-binding positions include Arg-261 to Asn-265 and His-268. A Zn(2+)-binding site is contributed by His-268. His-272 acts as the Proton acceptor; for 3-dehydroquinate synthase activity in catalysis. 7-phospho-2-dehydro-3-deoxy-D-arabino-heptonate contacts are provided by His-284 and Lys-353. His-284 lines the Zn(2+) pocket. The segment at Val-394–Ala-838 is EPSP synthase. Cys-820 serves as the catalytic For EPSP synthase activity. A shikimate kinase region spans residues Ala-857–Ser-1048. ATP is bound at residue Gly-863–Thr-870. A 3-dehydroquinase region spans residues Leu-1049–Glu-1269. The active-site Proton acceptor; for 3-dehydroquinate dehydratase activity is His-1172. The Schiff-base intermediate with substrate; for 3-dehydroquinate dehydratase activity role is filled by Lys-1200. Residues Ser-1282–Ile-1580 are shikimate dehydrogenase.

The protein in the N-terminal section; belongs to the sugar phosphate cyclases superfamily. Dehydroquinate synthase family. This sequence in the 2nd section; belongs to the EPSP synthase family. In the 3rd section; belongs to the shikimate kinase family. It in the 4th section; belongs to the type-I 3-dehydroquinase family. The protein in the C-terminal section; belongs to the shikimate dehydrogenase family. As to quaternary structure, homodimer. Requires Zn(2+) as cofactor.

The protein localises to the cytoplasm. The catalysed reaction is 7-phospho-2-dehydro-3-deoxy-D-arabino-heptonate = 3-dehydroquinate + phosphate. It carries out the reaction 3-dehydroquinate = 3-dehydroshikimate + H2O. The enzyme catalyses shikimate + NADP(+) = 3-dehydroshikimate + NADPH + H(+). It catalyses the reaction shikimate + ATP = 3-phosphoshikimate + ADP + H(+). The catalysed reaction is 3-phosphoshikimate + phosphoenolpyruvate = 5-O-(1-carboxyvinyl)-3-phosphoshikimate + phosphate. It functions in the pathway metabolic intermediate biosynthesis; chorismate biosynthesis; chorismate from D-erythrose 4-phosphate and phosphoenolpyruvate: step 2/7. Its pathway is metabolic intermediate biosynthesis; chorismate biosynthesis; chorismate from D-erythrose 4-phosphate and phosphoenolpyruvate: step 3/7. It participates in metabolic intermediate biosynthesis; chorismate biosynthesis; chorismate from D-erythrose 4-phosphate and phosphoenolpyruvate: step 4/7. The protein operates within metabolic intermediate biosynthesis; chorismate biosynthesis; chorismate from D-erythrose 4-phosphate and phosphoenolpyruvate: step 5/7. It functions in the pathway metabolic intermediate biosynthesis; chorismate biosynthesis; chorismate from D-erythrose 4-phosphate and phosphoenolpyruvate: step 6/7. Its function is as follows. The AROM polypeptide catalyzes 5 consecutive enzymatic reactions in prechorismate polyaromatic amino acid biosynthesis. This is Pentafunctional AROM polypeptide from Uncinocarpus reesii (strain UAMH 1704).